Reading from the N-terminus, the 102-residue chain is Sulfur globule protein CV3 (102 aa).

Residues 1–25 (MTMKRLLLVSTLAGASALATLPANA) form the signal peptide.

In terms of assembly, the protein envelope of the sulfur globules is composed of the three different proteins CV1, CV2 and CV3.

Functionally, structural protein of the sulfur globules, which are intracellular globules that serve for sulfur storage in purple sulfur bacteria. The protein is Sulfur globule protein CV3 (sgpC) of Allochromatium vinosum (strain ATCC 17899 / DSM 180 / NBRC 103801 / NCIMB 10441 / D) (Chromatium vinosum).